The sequence spans 285 residues: Glutamate racemase (285 aa).

Substrate is bound by residues 28–29 and 60–61; these read DS and YG. Cys-92 functions as the Proton donor/acceptor in the catalytic mechanism. Residue 93–94 coordinates substrate; the sequence is NT. Catalysis depends on Cys-204, which acts as the Proton donor/acceptor. 205–206 is a substrate binding site; that stretch reads TH.

This sequence belongs to the aspartate/glutamate racemases family.

The enzyme catalyses L-glutamate = D-glutamate. The protein operates within cell wall biogenesis; peptidoglycan biosynthesis. Functionally, provides the (R)-glutamate required for cell wall biosynthesis. The protein is Glutamate racemase of Escherichia coli O7:K1 (strain IAI39 / ExPEC).